The primary structure comprises 312 residues: NAD(P)(+)--arginine ADP-ribosyltransferase 2 (312 aa).

Residues 1-20 form the signal peptide; it reads MELLALRWVLLAGTLLSTSA. Residues 21–31 constitute a propeptide that is removed on maturation; that stretch reads ASSALQEGDLG. Disulfide bonds link C51–C260 and C159–C208. The TR mART core domain maps to 71–256; that stretch reads YAYAVGWRKA…IYLRSKGKMS (186 aa). Residues Y108, R164, and Q183 each contribute to the NAD(+) site. R164 is a catalytic residue. Residue S186 is part of the active site. S217 is an NAD(+) binding site. The active site involves E224. A propeptide spanning residues 267–312 is cleaved from the precursor; that stretch reads GGQWGRGHQEVGLGLSPGLALPVLPCSNCSCWGSGHRAGDPIPAAV.

This sequence belongs to the Arg-specific ADP-ribosyltransferase family.

The protein localises to the secreted. Its subcellular location is the extracellular space. The enzyme catalyses L-arginyl-[protein] + NAD(+) = N(omega)-(ADP-D-ribosyl)-L-arginyl-[protein] + nicotinamide + H(+). The chain is NAD(P)(+)--arginine ADP-ribosyltransferase 2 from Gallus gallus (Chicken).